Here is an 829-residue protein sequence, read N- to C-terminus: Outer dense fiber protein 2 (829 aa).

2 positions are modified to phosphoserine: Ser-73 and Ser-74. Position 92 is a phosphothreonine (Thr-92). Residue Ser-95 is modified to Phosphoserine; by TSSK4. A phosphoserine mark is found at Ser-106 and Ser-109. Phosphothreonine is present on Thr-110. Residues Ser-115 and Ser-129 each carry the phosphoserine modification. Lys-138 is covalently cross-linked (Glycyl lysine isopeptide (Lys-Gly) (interchain with G-Cter in SUMO2)). Ser-139 is subject to Phosphoserine. Residues 144-217 adopt a coiled-coil conformation; the sequence is QKGERQMAKR…MSKLVEAEMD (74 aa). Thr-231 is subject to Phosphothreonine. Coiled coils occupy residues 245–423 and 461–798; these read DINT…AEQL and EIIV…NYVQ. A Phosphoserine modification is found at Ser-261. Positions 392 to 413 are disordered; the sequence is KQKGDRDKESLKKAIRAQKERA. The interaction with BBOF1 stretch occupies residues 537–701; it reads KNYEGMIDNY…EAIHQSQLRL (165 aa). A Phosphoserine modification is found at Ser-632.

The protein belongs to the ODF2 family. Self-associates. Associates with microtubules and forms a fibrillar structure partially linked to the microtubule network. Interacts via its C-terminus with PLK1. Interacts with ODF1. Interacts with MARK4; the interaction is required for localization of ODF2 to centrioles. Interacts with TSSK4. Interacts with AKNA. Interacts with QRICH2. Interacts with CFAP58. Interacts with BBOF1. Interacts with CCDC38. Interacts with CCDC42. Tyrosine phosphorylated. Phosphorylated by TSSK4 on Ser-95. Testis-specific (at protein level). Highly expressed in cytoplasm of step 2 round spermatids. Detected in the middle piece and extends to about half the principal piece of the sperm tails.

Its subcellular location is the cytoplasm. The protein resides in the cytoskeleton. It is found in the microtubule organizing center. The protein localises to the centrosome. It localises to the cell projection. Its subcellular location is the cilium. The protein resides in the centriole. It is found in the spindle pole. The protein localises to the flagellum. Its function is as follows. Seems to be a major component of sperm tail outer dense fibers (ODF). ODFs are filamentous structures located on the outside of the axoneme in the midpiece and principal piece of the mammalian sperm tail and may help to maintain the passive elastic structures and elastic recoil of the sperm tail. May have a modulating influence on sperm motility. Functions as a general scaffold protein that is specifically localized at the distal/subdistal appendages of mother centrioles. Component of the centrosome matrix required for the localization of PLK1 and NIN to the centrosomes. Required for the formation and/or maintenance of normal CETN1 assembly. This Homo sapiens (Human) protein is Outer dense fiber protein 2 (ODF2).